A 187-amino-acid chain; its full sequence is Casparian strip membrane protein 1 (187 aa).

Over residues Met-1–Thr-10 the composition is skewed to basic and acidic residues. The tract at residues Met-1–Arg-20 is disordered. Topologically, residues Met-1–Ser-27 are cytoplasmic. The chain crosses the membrane as a helical span at residues Val-28–Met-48. Residues Gly-49–Thr-75 lie on the Extracellular side of the membrane. The N-linked (GlcNAc...) asparagine glycan is linked to Asn-52. A helical transmembrane segment spans residues Phe-76–Ile-96. The Cytoplasmic segment spans residues Val-97–Asp-115. Residues Ala-116–Ala-136 form a helical membrane-spanning segment. Topologically, residues His-137–Cys-162 are extracellular. Residues Leu-163–Ala-183 traverse the membrane as a helical segment. Residues Leu-184–Arg-187 are Cytoplasmic-facing.

It belongs to the Casparian strip membrane proteins (CASP) family. In terms of assembly, homodimer and heterodimers.

The protein localises to the cell membrane. Regulates membrane-cell wall junctions and localized cell wall deposition. Required for establishment of the Casparian strip membrane domain (CSD) and the subsequent formation of Casparian strips, a cell wall modification of the root endodermis that determines an apoplastic barrier between the intraorganismal apoplasm and the extraorganismal apoplasm and prevents lateral diffusion. The chain is Casparian strip membrane protein 1 from Zea mays (Maize).